The primary structure comprises 760 residues: MEHTYQYLWIISFVTLPVPMLIGMGLLLFPVSTKKLHRIWAFPSVLLLSIVMVFSIDLFIQQINSSSIYQYVWSWTINNDFSLEFGYLIDPLTSILLILITTVGILVLVYSDSYMSHDQGYLRFFVYMSFFNTSMLGLVTSSNLIQIYIFWELVGMCSYLLIGFWFTRPIVSNACQKAFVTNRVGDFGLLLGILGLYWITGSFEFQDLFEIFNNLIYNNDNEVHFLFVTLCAFLLFSGAIAKSAQFPLHVWLPDAMEGPTPISALIHAATMVAAGIFLVARLLPLFVVIPYIMKLIALIGIITVLLGATLAFAQKDIKRGLAYSTMSQLGYTMLALGMGSYRAALFHLITHAYSKALLFLGSGSIIHSMEVIVGYSPDKSQNMVLMGGLTKHVPITKIAFLLGTLSLCGIPPLACFWSKDEILNDSWSYSPIFAIIAFSTAGLTAFYMFRVYLLTFEGHLNIYFQNYSGKKNSAFYSISLWGKQGSKILKKKMRLLPLLTINNKNNNERASFFCFFWKKIYQTGGTVRKMTCPFITINHFGTKRIFSYPQESDNTILFPMLVLVLFTLFIGAIGIPFNQFNQEEMNFDILSKLLIPSLSLLHQNQNKSVDWYEFVTNSTFSVSIASFGIFIASSLYKPIYSSLQNLKFLNLVAKKGPKRILRDKIINVIYDWSYNRGYIDVFYAISLTEGIRRLAELTSFFDRRVIDGITNGVGFTSFFAGEGIKYVGGGRISFYLLLYLFYVLIFLLISSSIFSSFSSL.

Helical transmembrane passes span 9-29, 39-59, 89-109, 125-145, 147-167, 185-205, 221-241, 260-280, 282-302, 329-349, 356-376, 398-418, 429-449, 556-576, 620-640, and 734-754; these read WIISFVTLPVPMLIGMGLLLF, IWAFPSVLLLSIVMVFSIDLF, IDPLTSILLILITTVGILVLV, FVYMSFFNTSMLGLVTSSNLI, IYIFWELVGMCSYLLIGFWFT, GDFGLLLGILGLYWITGSFEF, NEVHFLFVTLCAFLLFSGAIA, TPISALIHAATMVAAGIFLVA, LLPLFVVIPYIMKLIALIGII, LGYTMLALGMGSYRAALFHLI, ALLFLGSGSIIHSMEVIVGYS, IAFLLGTLSLCGIPPLACFWS, YSPIFAIIAFSTAGLTAFYMF, ILFPMLVLVLFTLFIGAIGIP, FSVSIASFGIFIASSLYKPIY, and FYLLLYLFYVLIFLLISSSIF.

This sequence belongs to the complex I subunit 5 family. NDH is composed of at least 16 different subunits, 5 of which are encoded in the nucleus.

The protein localises to the plastid. It is found in the chloroplast thylakoid membrane. It catalyses the reaction a plastoquinone + NADH + (n+1) H(+)(in) = a plastoquinol + NAD(+) + n H(+)(out). It carries out the reaction a plastoquinone + NADPH + (n+1) H(+)(in) = a plastoquinol + NADP(+) + n H(+)(out). NDH shuttles electrons from NAD(P)H:plastoquinone, via FMN and iron-sulfur (Fe-S) centers, to quinones in the photosynthetic chain and possibly in a chloroplast respiratory chain. The immediate electron acceptor for the enzyme in this species is believed to be plastoquinone. Couples the redox reaction to proton translocation, and thus conserves the redox energy in a proton gradient. The chain is NAD(P)H-quinone oxidoreductase subunit 5, chloroplastic (ndhF) from Populus trichocarpa (Western balsam poplar).